The sequence spans 345 residues: WD40 repeat protein poxJ (345 aa).

WD repeat units lie at residues Ala15–Ser49, Leu59–Gln100, Val101–Thr146, and Val250–Ser284.

The protein belongs to the WD repeat rae1 family.

It participates in secondary metabolite biosynthesis. Its function is as follows. WD40 repeat protein; part of the gene cluster that mediates the biosynthesis of oxaleimides, cytotoxic compounds containing an unusual disubstituted succinimide moiety. The first step of the pathway is provided by the HR-PKS poxF that serves in a new mode of collaborative biosynthesis with the PKS-NRPS poxE, by providing the olefin containing amino acid substrate via the synthesis of an ACP-bound dec-4-enoate. The cytochrome P450 monooxygenase poxM-catalyzed oxidation at the alpha-position creates the enzyme-bound 2-hydroxydec-4-enoyl-ACP thioester, which may be prone to spontaneous hydrolysis to yield 2-hydroxydec-4-enoic acid due to increased electrophilicity of the carbonyl. 2-hydroxydec-4-enoic acid can then be further oxidized by poxM to yield the alpha-ketoacid 2-oxodec-4-enoicacid, which is reductively aminated by the aminotransferase poxL to yield (S,E)-2-aminodec-4-enoic acid. The Hybrid PKS-NRPS synthetase poxE then performs condensation between the octaketide product of its PKS modules and the amino group of (S,E)-2-aminodec-4-enoic acid which is activated and incorporated by the adenylation domain. The resulting aminoacyl product can be cyclized by the Diels-Alderase PoxQ and reductively released by the reductive (R) domain of poxE to yield an aldehyde intermediate. The released aldehyde is then substrate for a Knoevenagel condensation by the hydrolyase poxO followed by an oxidation at the 5-position of the pyrrolidone ring. The presence of the olefin from the amino acid building block allows for migration of the substituted allyl group to occur. This allylic transposition reaction takes place in a conjugate addition, semipinacol-like fashion to yield a succinimide intermediate. Iterative two-electron oxidations of the C7 methyl of the succinimide intermediate to the carboxylic acid can be catalyzed by one of two remaining cytochrome P450 monooxygenasess poxC or poxD to yield oxaleimide A. Subsequent oxidation yields the maleimide scaffold oxaleimide I. Both oxaleimide A and oxaleimide I can undergo oxidative modifications in the decalin ring to yield the series of products oxaleimides B to H. In Penicillium oxalicum (strain 114-2 / CGMCC 5302) (Penicillium decumbens), this protein is WD40 repeat protein poxJ.